The following is a 125-amino-acid chain: Oxytocin-neurophysin 1 (125 aa).

The first 19 residues, 1–19, serve as a signal peptide directing secretion; sequence MAGSSLACCLLGLLALTSA. Cys-20 and Cys-25 are joined by a disulfide. A Glycine amide modification is found at Gly-28. Cystine bridges form between Cys-41–Cys-85, Cys-44–Cys-58, Cys-52–Cys-75, Cys-59–Cys-65, Cys-92–Cys-104, Cys-98–Cys-116, and Cys-105–Cys-110.

Belongs to the vasopressin/oxytocin family. As to quaternary structure, interacts with oxytocin receptor (Ki=1.5 nM). Interacts with vasopressin V1aR/AVPR1A (Ki=37 nM), V1bR/AVPR1B (Ki=222 nM), and V2R/AVPR2 receptors (Ki=823 nM).

Its function is as follows. Neurophysin 1 specifically binds oxytocin. In terms of biological role, oxytocin causes contraction of the smooth muscle of the uterus and of the mammary gland. Acts by binding to oxytocin receptor (OXTR). The polypeptide is Oxytocin-neurophysin 1 (OXT) (Ovis aries (Sheep)).